Reading from the N-terminus, the 951-residue chain is Bifunctional glutamine synthetase adenylyltransferase/adenylyl-removing enzyme (951 aa).

An adenylyl removase region spans residues 1–445; it reads MSILPLPALP…VFDELIGDDA (445 aa). Residues 454-951 are adenylyl transferase; sequence HSSYSSLWQD…VSWNKWLMGA (498 aa).

Belongs to the GlnE family. The cofactor is Mg(2+).

It carries out the reaction [glutamine synthetase]-O(4)-(5'-adenylyl)-L-tyrosine + phosphate = [glutamine synthetase]-L-tyrosine + ADP. The catalysed reaction is [glutamine synthetase]-L-tyrosine + ATP = [glutamine synthetase]-O(4)-(5'-adenylyl)-L-tyrosine + diphosphate. Functionally, involved in the regulation of glutamine synthetase GlnA, a key enzyme in the process to assimilate ammonia. When cellular nitrogen levels are high, the C-terminal adenylyl transferase (AT) inactivates GlnA by covalent transfer of an adenylyl group from ATP to specific tyrosine residue of GlnA, thus reducing its activity. Conversely, when nitrogen levels are low, the N-terminal adenylyl removase (AR) activates GlnA by removing the adenylyl group by phosphorolysis, increasing its activity. The regulatory region of GlnE binds the signal transduction protein PII (GlnB) which indicates the nitrogen status of the cell. This Pectobacterium atrosepticum (strain SCRI 1043 / ATCC BAA-672) (Erwinia carotovora subsp. atroseptica) protein is Bifunctional glutamine synthetase adenylyltransferase/adenylyl-removing enzyme.